The sequence spans 235 residues: Large ribosomal subunit protein uL1 (235 aa).

Belongs to the universal ribosomal protein uL1 family. Part of the 50S ribosomal subunit.

Functionally, binds directly to 23S rRNA. The L1 stalk is quite mobile in the ribosome, and is involved in E site tRNA release. In terms of biological role, protein L1 is also a translational repressor protein, it controls the translation of the L11 operon by binding to its mRNA. This Corynebacterium diphtheriae (strain ATCC 700971 / NCTC 13129 / Biotype gravis) protein is Large ribosomal subunit protein uL1.